We begin with the raw amino-acid sequence, 236 residues long: Small ribosomal subunit protein uS2c (236 aa).

Belongs to the universal ribosomal protein uS2 family.

Its subcellular location is the plastid. It is found in the chloroplast. The sequence is that of Small ribosomal subunit protein uS2c (rps2) from Helianthus annuus (Common sunflower).